Reading from the N-terminus, the 326-residue chain is Microtubule-associated protein RP/EB family member 2 (326 aa).

Phosphoserine is present on Ser9. The Calponin-homology (CH) domain maps to 56 to 158 (TMSRHDIIAW…FIQWFKKFYD (103 aa)). Tyr166 carries the phosphotyrosine modification. Disordered stretches follow at residues 170 to 239 (EARQ…DKDL) and 298 to 326 (ASDE…QEEY). The segment at 186–326 (QIFNLPKKSH…EQQPQQQEEY (141 aa)) is DCTN1-binding. Residues 199–233 (SPTAGAAKSSPASKPGSTPSRPSSAKRASSSGSAS) show a composition bias toward low complexity. Ser218 and Ser235 each carry phosphoserine. Positions 235–305 (SDKDLETQVI…LYASDEHEGH (71 aa)) constitute an EB1 C-terminal domain. Positions 258 to 301 (EGVEKERDFYFGKLREIELLCQEHGQENDDLVQRLMDVLYASDE) are APC-binding. Residues 299-316 (SDEHEGHPEEPEAEEQVH) are compositionally biased toward basic and acidic residues. A compositionally biased stretch (low complexity) spans 317–326 (EQQPQQQEEY).

Belongs to the MAPRE family. In terms of assembly, interacts with DCTN1. Interacts with APC (via C-terminal). Interacts with monomeric and polymerized tubulin. Interacts with SLAIN1. Interacts (via the N-terminal region) with BAG1. Interacts with ASB14. Interacts with HAX1; this interaction is essential for epidermal cell migration. In terms of processing, phosphorylated at Ser-235 by CK2 leading to enhanced cell adhesion. Phosphorylated by CDK1 and AURKB during mitosis reduces the binding affinity of MAPRE2 for microtubules. Ubiquitinated in an ASB14-dependent manner; leading to proteasomal degradation.

It localises to the cytoplasm. It is found in the cytoskeleton. Adapter protein that is involved in microtubule polymerization, and spindle function by stabilizing microtubules and anchoring them at centrosomes. Therefore, ensures mitotic progression and genome stability. Acts as a central regulator of microtubule reorganization in apico-basal epithelial differentiation. Plays a role during oocyte meiosis by regulating microtubule dynamics. Participates in neurite growth by interacting with plexin B3/PLXNB3 and microtubule reorganization during apico-basal epithelial differentiation. Also plays an essential role for cell migration and focal adhesion dynamics. Mechanistically, recruits HAX1 to microtubules in order to regulate focal adhesion dynamics. This is Microtubule-associated protein RP/EB family member 2 (MAPRE2) from Bos taurus (Bovine).